The chain runs to 460 residues: Argininosuccinate lyase (460 aa).

This sequence belongs to the lyase 1 family. Argininosuccinate lyase subfamily.

It localises to the cytoplasm. It carries out the reaction 2-(N(omega)-L-arginino)succinate = fumarate + L-arginine. The protein operates within amino-acid biosynthesis; L-arginine biosynthesis; L-arginine from L-ornithine and carbamoyl phosphate: step 3/3. The sequence is that of Argininosuccinate lyase from Mannheimia succiniciproducens (strain KCTC 0769BP / MBEL55E).